Here is a 143-residue protein sequence, read N- to C-terminus: Peptide methionine sulfoxide reductase MsrB (143 aa).

One can recognise a MsrB domain in the interval 16 to 139 (DAELRRRLTP…NSAALNFEAK (124 aa)). Residues cysteine 55, cysteine 58, cysteine 104, and cysteine 107 each coordinate Zn(2+). Cysteine 128 acts as the Nucleophile in catalysis.

This sequence belongs to the MsrB Met sulfoxide reductase family. Requires Zn(2+) as cofactor.

It carries out the reaction L-methionyl-[protein] + [thioredoxin]-disulfide + H2O = L-methionyl-(R)-S-oxide-[protein] + [thioredoxin]-dithiol. This Burkholderia thailandensis (strain ATCC 700388 / DSM 13276 / CCUG 48851 / CIP 106301 / E264) protein is Peptide methionine sulfoxide reductase MsrB.